Here is a 352-residue protein sequence, read N- to C-terminus: UDP-N-acetylglucosamine--N-acetylmuramyl-(pentapeptide) pyrophosphoryl-undecaprenol N-acetylglucosamine transferase (352 aa).

Residues Ser-195 and Gln-287 each coordinate UDP-N-acetyl-alpha-D-glucosamine.

It belongs to the glycosyltransferase 28 family. MurG subfamily.

The protein localises to the cell membrane. The enzyme catalyses Mur2Ac(oyl-L-Ala-gamma-D-Glu-L-Lys-D-Ala-D-Ala)-di-trans,octa-cis-undecaprenyl diphosphate + UDP-N-acetyl-alpha-D-glucosamine = beta-D-GlcNAc-(1-&gt;4)-Mur2Ac(oyl-L-Ala-gamma-D-Glu-L-Lys-D-Ala-D-Ala)-di-trans,octa-cis-undecaprenyl diphosphate + UDP + H(+). Its pathway is cell wall biogenesis; peptidoglycan biosynthesis. Cell wall formation. Catalyzes the transfer of a GlcNAc subunit on undecaprenyl-pyrophosphoryl-MurNAc-pentapeptide (lipid intermediate I) to form undecaprenyl-pyrophosphoryl-MurNAc-(pentapeptide)GlcNAc (lipid intermediate II). This Streptococcus pneumoniae (strain 70585) protein is UDP-N-acetylglucosamine--N-acetylmuramyl-(pentapeptide) pyrophosphoryl-undecaprenol N-acetylglucosamine transferase.